We begin with the raw amino-acid sequence, 151 residues long: Ribosomal RNA large subunit methyltransferase H (151 aa).

Residues leucine 73, glycine 100, and 119–124 (LSDLTM) each bind S-adenosyl-L-methionine.

It belongs to the RNA methyltransferase RlmH family. In terms of assembly, homodimer.

It localises to the cytoplasm. The enzyme catalyses pseudouridine(1915) in 23S rRNA + S-adenosyl-L-methionine = N(3)-methylpseudouridine(1915) in 23S rRNA + S-adenosyl-L-homocysteine + H(+). In terms of biological role, specifically methylates the pseudouridine at position 1915 (m3Psi1915) in 23S rRNA. In Aliarcobacter butzleri (strain RM4018) (Arcobacter butzleri), this protein is Ribosomal RNA large subunit methyltransferase H.